A 307-amino-acid chain; its full sequence is NAD(+) hydrolase TcpC (307 aa).

The chain crosses the membrane as a helical span at residues 22-42; that stretch reads YNILFFIFLSIAIPFLLFLAW. One can recognise a TIR domain in the interval 169–303; sequence THYDFFISHA…EIARELAEIA (135 aa). Residues 178 to 179 and Glu208 each bind NAD(+); that span reads AK. Residue Glu244 is part of the active site.

In terms of assembly, interacts with host MYD88. Interacts with host TLR4.

The protein resides in the secreted. It is found in the membrane. It catalyses the reaction NAD(+) + H2O = ADP-D-ribose + nicotinamide + H(+). The enzyme catalyses NADP(+) + H2O = ADP-D-ribose 2'-phosphate + nicotinamide + H(+). In terms of biological role, virulence factor that suppresses host Toll-like receptor (TLR)-mediated cytokine production upon infection, thereby increasing bacterial burden in the urinary tract and promoting renal tissue damage. Acts as a NAD(+) hydrolase (NADase) by catalyzing cleavage of NAD(+) into ADP-D-ribose (ADPR) and nicotinamide. Also able to hydrolyze NADP(+), but not other NAD(+)-related molecules. The protein is NAD(+) hydrolase TcpC of Escherichia coli O6:H1 (strain CFT073 / ATCC 700928 / UPEC).